The following is a 686-amino-acid chain: Band 4.1-like protein 4A (686 aa).

In terms of domain architecture, FERM spans 11-299; the sequence is FYCEVLLLDE…EHHTFFRMPE (289 aa). Position 304 is a phosphoserine (Ser-304). The interval 331 to 686 is disordered; it reads RDLSIQLPRP…IQASRLKTET (356 aa). Positions 357-376 are enriched in polar residues; sequence AQTQPAESNSISRITANMEN. Phosphoserine occurs at positions 389, 393, and 402. Residues 418-428 are compositionally biased toward polar residues; the sequence is GPQSGLYNSPS. Over residues 479-489 the composition is skewed to low complexity; sequence RCNTSSGSESE. Basic and acidic residues-rich tracts occupy residues 518-527 and 547-561; these read VLRRQKEKNQ and QAKE…KELV. Basic residues predominate over residues 588 to 601; it reads IRHSHSPRSYRQYR. The segment covering 648 to 658 has biased composition (basic and acidic residues); that stretch reads GSKDSLMEEKP. A compositionally biased stretch (polar residues) spans 673-686; sequence TIKTIQASRLKTET.

As to expression, expressed in many tissues. High levels of expression in brain, liver, thymus and peripheral blood leukocytes and low levels of expression in heart, kidney, testis and colon.

Its subcellular location is the cytoplasm. It localises to the cytoskeleton. The chain is Band 4.1-like protein 4A from Homo sapiens (Human).